The following is a 318-amino-acid chain: Probable serine/threonine-protein kinase MRK1 homolog (318 aa).

The 274-residue stretch at 40–313 folds into the Protein kinase domain; the sequence is YRYVEMIGRG…ASELLRKQFF (274 aa). ATP is bound by residues 46-54 and Lys68; that span reads IGRGSFGVV. Catalysis depends on Asp159, which acts as the Proton acceptor.

This sequence belongs to the protein kinase superfamily. CMGC Ser/Thr protein kinase family. GSK-3 subfamily.

The protein resides in the cytoplasm. Its subcellular location is the nucleus. It catalyses the reaction L-seryl-[protein] + ATP = O-phospho-L-seryl-[protein] + ADP + H(+). The enzyme catalyses L-threonyl-[protein] + ATP = O-phospho-L-threonyl-[protein] + ADP + H(+). May play a role in the initiation and completion of mitosis. In Encephalitozoon cuniculi (strain GB-M1) (Microsporidian parasite), this protein is Probable serine/threonine-protein kinase MRK1 homolog (MRK1).